Reading from the N-terminus, the 242-residue chain is ATP synthase subunit b (242 aa).

Transmembrane regions (helical) follow at residues 8–28 and 87–107; these read VLPFLLVLLFAFAPLALASAP and LMDLFWRVLNFAVLMAILIKF.

Belongs to the ATPase B chain family. In terms of assembly, F-type ATPases have 2 components, F(1) - the catalytic core - and F(0) - the membrane proton channel. F(1) has five subunits: alpha(3), beta(3), gamma(1), delta(1), epsilon(1). F(0) has three main subunits: a(1), b(2) and c(10-14). The alpha and beta chains form an alternating ring which encloses part of the gamma chain. F(1) is attached to F(0) by a central stalk formed by the gamma and epsilon chains, while a peripheral stalk is formed by the delta and b chains.

Its subcellular location is the cell inner membrane. In terms of biological role, f(1)F(0) ATP synthase produces ATP from ADP in the presence of a proton or sodium gradient. F-type ATPases consist of two structural domains, F(1) containing the extramembraneous catalytic core and F(0) containing the membrane proton channel, linked together by a central stalk and a peripheral stalk. During catalysis, ATP synthesis in the catalytic domain of F(1) is coupled via a rotary mechanism of the central stalk subunits to proton translocation. Functionally, component of the F(0) channel, it forms part of the peripheral stalk, linking F(1) to F(0). In Desulfotalea psychrophila (strain LSv54 / DSM 12343), this protein is ATP synthase subunit b.